Here is a 228-residue protein sequence, read N- to C-terminus: Somatolactin (228 aa).

A signal peptide spans 1–24 (MFSIRMNKVLQGFVCLMLTHRIVG). Cystine bridges form between cysteine 29/cysteine 38, cysteine 88/cysteine 200, and cysteine 217/cysteine 225. N-linked (GlcNAc...) asparagine glycosylation is found at asparagine 141 and asparagine 177.

The protein belongs to the somatotropin/prolactin family.

It is found in the secreted. This Anguilla anguilla (European freshwater eel) protein is Somatolactin.